The chain runs to 248 residues: Pyridoxine 5'-phosphate synthase (248 aa).

N12 lines the 3-amino-2-oxopropyl phosphate pocket. Position 14 to 15 (14 to 15) interacts with 1-deoxy-D-xylulose 5-phosphate; it reads DH. Residue R23 participates in 3-amino-2-oxopropyl phosphate binding. Catalysis depends on H48, which acts as the Proton acceptor. The 1-deoxy-D-xylulose 5-phosphate site is built by R50 and H55. The active-site Proton acceptor is E75. 1-deoxy-D-xylulose 5-phosphate is bound at residue T105. The Proton donor role is filled by H196. 3-amino-2-oxopropyl phosphate-binding positions include G197 and 218–219; that span reads GH.

This sequence belongs to the PNP synthase family. In terms of assembly, homooctamer; tetramer of dimers.

It localises to the cytoplasm. The enzyme catalyses 3-amino-2-oxopropyl phosphate + 1-deoxy-D-xylulose 5-phosphate = pyridoxine 5'-phosphate + phosphate + 2 H2O + H(+). Its pathway is cofactor biosynthesis; pyridoxine 5'-phosphate biosynthesis; pyridoxine 5'-phosphate from D-erythrose 4-phosphate: step 5/5. In terms of biological role, catalyzes the complicated ring closure reaction between the two acyclic compounds 1-deoxy-D-xylulose-5-phosphate (DXP) and 3-amino-2-oxopropyl phosphate (1-amino-acetone-3-phosphate or AAP) to form pyridoxine 5'-phosphate (PNP) and inorganic phosphate. This is Pyridoxine 5'-phosphate synthase from Ectopseudomonas mendocina (strain ymp) (Pseudomonas mendocina).